A 576-amino-acid chain; its full sequence is Proline--tRNA ligase (576 aa).

This sequence belongs to the class-II aminoacyl-tRNA synthetase family. ProS type 1 subfamily. In terms of assembly, homodimer.

The protein localises to the cytoplasm. It catalyses the reaction tRNA(Pro) + L-proline + ATP = L-prolyl-tRNA(Pro) + AMP + diphosphate. Its function is as follows. Catalyzes the attachment of proline to tRNA(Pro) in a two-step reaction: proline is first activated by ATP to form Pro-AMP and then transferred to the acceptor end of tRNA(Pro). As ProRS can inadvertently accommodate and process non-cognate amino acids such as alanine and cysteine, to avoid such errors it has two additional distinct editing activities against alanine. One activity is designated as 'pretransfer' editing and involves the tRNA(Pro)-independent hydrolysis of activated Ala-AMP. The other activity is designated 'posttransfer' editing and involves deacylation of mischarged Ala-tRNA(Pro). The misacylated Cys-tRNA(Pro) is not edited by ProRS. The polypeptide is Proline--tRNA ligase (Leptospira interrogans serogroup Icterohaemorrhagiae serovar copenhageni (strain Fiocruz L1-130)).